Consider the following 446-residue polypeptide: Eukaryotic translation initiation factor 2 subunit gamma (446 aa).

The region spanning 21 to 227 (QATINIGTIG…YIVKKIPIPV (207 aa)) is the tr-type G domain. The segment at 30–37 (GHVAHGKS) is G1. 33 to 38 (AHGKST) lines the GTP pocket. The segment at 58–62 (NITIK) is G2. The segment at 114–117 (DCPG) is G3. Residues 170-173 (NKVD) and 205-207 (SAQ) contribute to the GTP site. The tract at residues 170–173 (NKVD) is G4. The tract at residues 205-207 (SAQ) is G5. An interacts with cdc123 region spans residues 436–446 (AKVVEGKTLKV).

The protein belongs to the TRAFAC class translation factor GTPase superfamily. Classic translation factor GTPase family. EIF2G subfamily. In terms of assembly, eukaryotic translation initiation factor 2 eIF2 is a heterotrimeric complex composed of an alpha, a beta and a gamma subunit. The factors eIF-1, eIF-2, eIF-3, TIF5/eIF-5 and methionyl-tRNAi form a multifactor complex (MFC) that may bind to the 40S ribosome. Interacts with cdc123; the interaction is direct.

The protein localises to the cytoplasm. The protein resides in the cytosol. The catalysed reaction is GTP + H2O = GDP + phosphate + H(+). As a subunit of eukaryotic initiation factor 2 eIF2, involved in the early steps of protein synthesis. In the presence of GTP, eIF-2 forms a ternary complex with initiator tRNA Met-tRNAi and then recruits the 40S ribosomal complex and initiation factors eIF-1, eIF-1A and eIF-3 to form the 43S pre-initiation complex (43S PIC), a step that determines the rate of protein translation. The 43S PIC binds to mRNA and scans downstream to the initiation codon, where it forms a 48S initiation complex by codon-anticodon base pairing. This leads to the displacement of eIF-1 to allow GTPase-activating protein (GAP) eIF-5-mediated hydrolysis of eIF2-bound GTP. Hydrolysis of GTP and release of Pi, which makes GTP hydrolysis irreversible, causes the release of the eIF-2-GDP binary complex from the 40S subunit, an event that is essential for the subsequent joining of the 60S ribosomal subunit to form an elongation-competent 80S ribosome. In order for eIF-2 to recycle and catalyze another round of initiation, the GDP bound to eIF-2 must be exchanged with GTP by way of a reaction catalyzed by GDP-GTP exchange factor (GEF) eIF-2B. This Schizosaccharomyces pombe (strain 972 / ATCC 24843) (Fission yeast) protein is Eukaryotic translation initiation factor 2 subunit gamma (tif213).